The sequence spans 320 residues: MSVGFIGAGQLAFALAKGFTAAGVVAAHKIMASSPDMDLATVSALRKMGVNLTHHNKETVQHSDVLFLAVKPHIIPFILDEIAANIEARHIVVSCAAGVTISSIEKKLTAFQPAPKVIRCMTNTPVVVREGATVYATGTHAQVEDGRLLEQLMSSVGFCTEVEEDLIDAVTGLSGSGPAYAFTALDALADGGVKMGLPRRLAVRLGAQALLGAAKMLLDSEQHPGQLKDNVCSPGGATIHALHVLESGGFRSLLIKAVEASCTRTRELQSMADQEKVSPAAIKKTILDKVKLDSPPGTSLAPSGHSKLLPRSMAPAGKQD.

Ser2 is modified (N-acetylserine). NADP(+) contacts are provided by residues 6-11 (IGAGQL) and Ser34. Residues Ala8, Gln10, Leu11, Ser34, Asp36, Asn56, Val70, Lys71, and Ala97 each contribute to the NADPH site. NADP(+) is bound by residues Asn56, 69-72 (AVKP), and 95-97 (CAA). Glu164 provides a ligand contact to L-proline. Asn230 lines the NADPH pocket. Positions 237 and 238 each coordinate L-proline. Ser278 carries the phosphoserine modification. The tract at residues 292–320 (LDSPPGTSLAPSGHSKLLPRSMAPAGKQD) is disordered.

It belongs to the pyrroline-5-carboxylate reductase family. As to quaternary structure, homodecamer; composed of 5 homodimers. Interacts with LTO1.

The protein resides in the mitochondrion. It carries out the reaction L-proline + NADP(+) = (S)-1-pyrroline-5-carboxylate + NADPH + 2 H(+). It catalyses the reaction L-proline + NAD(+) = (S)-1-pyrroline-5-carboxylate + NADH + 2 H(+). The protein operates within amino-acid biosynthesis; L-proline biosynthesis; L-proline from L-glutamate 5-semialdehyde: step 1/1. Oxidoreductase that catalyzes the last step in proline biosynthesis, which corresponds to the reduction of pyrroline-5-carboxylate to L-proline using NAD(P)H. At physiologic concentrations, has higher specific activity in the presence of NADH. Involved in the cellular response to oxidative stress. The protein is Pyrroline-5-carboxylate reductase 1, mitochondrial (PYCR1) of Bos taurus (Bovine).